A 684-amino-acid polypeptide reads, in one-letter code: Chaperone protein HtpG (684 aa).

Positions 1–329 are a; substrate-binding; sequence MSKKGTIGVT…SPDIPLNVSR (329 aa). The segment at 330–548 is b; that stretch reads SYLQSDANVK…FMRRMRDMAQ (219 aa). Residues 549–684 form a c region; the sequence is LQPGMSFYGE…EFIRRSQRLL (136 aa).

Belongs to the heat shock protein 90 family. As to quaternary structure, homodimer.

It localises to the cytoplasm. Functionally, molecular chaperone. Has ATPase activity. The chain is Chaperone protein HtpG from Porphyromonas gingivalis (strain ATCC BAA-308 / W83).